Here is a 609-residue protein sequence, read N- to C-terminus: Myoneurin (609 aa).

A BTB domain is found at 24-89 (CDCTILIGDF…IYSGNLNYDS (66 aa)). Short sequence motifs (nuclear localization signal) lie at residues 172-188 (KKSQKIKRWKRPLRSHQ) and 257-262 (QKPAKL). 8 C2H2-type zinc fingers span residues 301–323 (PVCNTCGKVFSEASSLRRHMRIH), 329–351 (YVCHLCAKAFTQCNQLKTHVRTH), 357–380 (YQCKKCDKGFAQKCQLVFHSRMHH), 386–408 (YKCDVCNLQFATSSNLKIHARKH), 414–436 (YVCDRCGQRFAQASTLTYHVRRH), 442–464 (YVCDTCGKAFAVSSSLITHARKH), 470–492 (YICGVCRKSFISSGELNKHFRSH), and 498–521 (FVCEVCGNSYTDVKNLKKHKLKMH). Residues 528-553 (IEMKSAENSSSSEDSTTKSPEPESLE) are disordered. Over residues 533–546 (AENSSSSEDSTTKS) the composition is skewed to low complexity.

The protein resides in the nucleus. The protein is Myoneurin (mynn) of Xenopus laevis (African clawed frog).